We begin with the raw amino-acid sequence, 258 residues long: UPF0246 protein MS0374 (258 aa).

Belongs to the UPF0246 family.

This chain is UPF0246 protein MS0374, found in Mannheimia succiniciproducens (strain KCTC 0769BP / MBEL55E).